The chain runs to 217 residues: MHPSSRFHSNKKTFVRINNAIRAKEVLVIDSTGKSLGVLPIQEAQQRAQQQGLDLVEVSPHAHPPVCKILDYGKFKYSLSKKEKDSKKGATKLKEIQLHVNINEHDFLIKLKQAEAFMAKGMKVKFNLFLRGREITHQDLALNLMNRLIKELAHVGQTDQEPKLAGRNISLTFTPLPANKRLLKYNLPETETTRIREENREKQKEKENTSKEGNKDA.

The segment at 185 to 217 is disordered; it reads YNLPETETTRIREENREKQKEKENTSKEGNKDA. Over residues 191-217 the composition is skewed to basic and acidic residues; that stretch reads ETTRIREENREKQKEKENTSKEGNKDA.

It belongs to the IF-3 family. As to quaternary structure, monomer.

The protein resides in the cytoplasm. Its function is as follows. IF-3 binds to the 30S ribosomal subunit and shifts the equilibrium between 70S ribosomes and their 50S and 30S subunits in favor of the free subunits, thus enhancing the availability of 30S subunits on which protein synthesis initiation begins. The polypeptide is Translation initiation factor IF-3 (Methylacidiphilum infernorum (isolate V4) (Methylokorus infernorum (strain V4))).